A 907-amino-acid polypeptide reads, in one-letter code: Probable dipeptidyl-aminopeptidase B (907 aa).

Positions 1–26 (MPRQRAPKEEEAELLTKQERSTRSSE) are enriched in basic and acidic residues. Residues 1 to 70 (MPRQRAPKEE…EKYTDEDDEA (70 aa)) form a disordered region. The Cytoplasmic segment spans residues 1 to 93 (MPRQRAPKEE…PVAVDKKTRR (93 aa)). Low complexity predominate over residues 30–44 (DASVSSISTTSLVLE). A helical; Signal-anchor for type II membrane protein transmembrane segment spans residues 94 to 114 (WLWIVGIACVTGWALALVFFL). Over 115–907 (MSGSYKHVST…SQVDARLERR (793 aa)) the chain is Vacuolar. The N-linked (GlcNAc...) asparagine glycan is linked to Asn560. Ser751 functions as the Charge relay system in the catalytic mechanism. The N-linked (GlcNAc...) asparagine glycan is linked to Asn805. Residues Asp828 and His861 each act as charge relay system in the active site.

This sequence belongs to the peptidase S9B family.

It localises to the vacuole membrane. It carries out the reaction Release of an N-terminal dipeptide, Xaa-Yaa-|-Zaa-, from a polypeptide, preferentially when Yaa is Pro, provided Zaa is neither Pro nor hydroxyproline.. Its function is as follows. Type IV dipeptidyl-peptidase which removes N-terminal dipeptides sequentially from polypeptides having unsubstituted N-termini provided that the penultimate residue is proline. This chain is Probable dipeptidyl-aminopeptidase B (dapB), found in Pyrenophora teres f. teres (strain 0-1) (Barley net blotch fungus).